Here is a 34-residue protein sequence, read N- to C-terminus: Photosystem II reaction center protein Psb30 (34 aa).

A helical membrane pass occupies residues 6–26; the sequence is VIAQLVSLGVIVLVGPAVIIL.

The protein belongs to the Psb30/Ycf12 family. PSII is composed of 1 copy each of membrane proteins PsbA, PsbB, PsbC, PsbD, PsbE, PsbF, PsbH, PsbI, PsbJ, PsbK, PsbL, PsbM, PsbT, PsbX, PsbY, PsbZ, Psb30/Ycf12, peripheral proteins of the oxygen-evolving complex and a large number of cofactors. It forms dimeric complexes.

It is found in the plastid. The protein localises to the chloroplast thylakoid membrane. Its function is as follows. A core subunit of photosystem II (PSII), probably helps stabilize the reaction center. This Pyropia yezoensis (Susabi-nori) protein is Photosystem II reaction center protein Psb30.